The sequence spans 184 residues: Crossover junction endodeoxyribonuclease RuvC (184 aa).

Residues Asp7, Glu68, and Asp141 contribute to the active site. The Mg(2+) site is built by Asp7, Glu68, and Asp141.

The protein belongs to the RuvC family. Homodimer which binds Holliday junction (HJ) DNA. The HJ becomes 2-fold symmetrical on binding to RuvC with unstacked arms; it has a different conformation from HJ DNA in complex with RuvA. In the full resolvosome a probable DNA-RuvA(4)-RuvB(12)-RuvC(2) complex forms which resolves the HJ. Mg(2+) is required as a cofactor.

It localises to the cytoplasm. It carries out the reaction Endonucleolytic cleavage at a junction such as a reciprocal single-stranded crossover between two homologous DNA duplexes (Holliday junction).. Functionally, the RuvA-RuvB-RuvC complex processes Holliday junction (HJ) DNA during genetic recombination and DNA repair. Endonuclease that resolves HJ intermediates. Cleaves cruciform DNA by making single-stranded nicks across the HJ at symmetrical positions within the homologous arms, yielding a 5'-phosphate and a 3'-hydroxyl group; requires a central core of homology in the junction. The consensus cleavage sequence is 5'-(A/T)TT(C/G)-3'. Cleavage occurs on the 3'-side of the TT dinucleotide at the point of strand exchange. HJ branch migration catalyzed by RuvA-RuvB allows RuvC to scan DNA until it finds its consensus sequence, where it cleaves and resolves the cruciform DNA. The protein is Crossover junction endodeoxyribonuclease RuvC of Mycobacterium ulcerans (strain Agy99).